The sequence spans 350 residues: Phosphotriesterase-related protein (350 aa).

Residues histidine 22, histidine 24, glutamate 169, histidine 201, histidine 230, and aspartate 298 each contribute to the a divalent metal cation site.

Belongs to the metallo-dependent hydrolases superfamily. Phosphotriesterase family. A divalent metal cation is required as a cofactor.

The protein is Phosphotriesterase-related protein of Drosophila yakuba (Fruit fly).